A 608-amino-acid polypeptide reads, in one-letter code: MLWRCNWVKQRKRILNTLSFSSIHGQYPREYTAAKPLTHDNVYSCLRESPADLKTLNFFFWCAKQNNYFHDDRAFDHMVGVVEKLTREYYSIDRIIERLKISGCEIKPRVFLLLLEIFWRGHIYDKAIEVYTGMSSFGFVPNTRAMNMMMDVNFKLNVVNGALEIFEGIRFRNFFSFDIALSHFCSRGGRGDLVGVKIVLKRMIGEGFYPNRERFGQILRLCCRTGCVSEAFQVVGLMICSGISVSVNVWSMLVSGFFRSGEPQKAVDLFNKMIQIGCSPNLVTYTSLIKGFVDLGMVDEAFTVLSKVQSEGLAPDIVLCNLMIHTYTRLGRFEEARKVFTSLEKRKLVPDQYTFASILSSLCLSGKFDLVPRITHGIGTDFDLVTGNLLSNCFSKIGYNSYALKVLSIMSYKDFALDCYTYTVYLSALCRGGAPRAAIKMYKIIIKEKKHLDAHFHSAIIDSLIELGKYNTAVHLFKRCILEKYPLDVVSYTVAIKGLVRAKRIEEAYSLCCDMKEGGIYPNRRTYRTIISGLCKEKETEKVRKILRECIQEGVELDPNTKFQVYSLLSRYRGDFSEFRSVFEKWKSEFTENVDVSDSDDELFVSVG.

13 PPR repeats span residues 107-141, 142-172, 173-210, 211-245, 246-280, 281-315, 316-350, 351-381, 383-417, 418-452, 453-487, 488-522, and 523-557; these read KPRV…GFVP, NTRA…IRFR, NFFS…GFYP, NRER…GISV, SVNV…GCSP, NLVT…GLAP, DIVL…KLVP, DQYT…IGTD, DLVT…DFAL, DCYT…KKHL, DAHF…KYPL, DVVS…GIYP, and NRRT…GVEL.

It belongs to the PPR family. P subfamily.

The chain is Putative pentatricopeptide repeat-containing protein At1g16830 from Arabidopsis thaliana (Mouse-ear cress).